The following is a 308-amino-acid chain: Tetraacyldisaccharide 4'-kinase (308 aa).

An ATP-binding site is contributed by 63 to 70 (SFGGNGKT).

Belongs to the LpxK family.

The catalysed reaction is a lipid A disaccharide + ATP = a lipid IVA + ADP + H(+). It participates in glycolipid biosynthesis; lipid IV(A) biosynthesis; lipid IV(A) from (3R)-3-hydroxytetradecanoyl-[acyl-carrier-protein] and UDP-N-acetyl-alpha-D-glucosamine: step 6/6. In terms of biological role, transfers the gamma-phosphate of ATP to the 4'-position of a tetraacyldisaccharide 1-phosphate intermediate (termed DS-1-P) to form tetraacyldisaccharide 1,4'-bis-phosphate (lipid IVA). In Campylobacter jejuni subsp. jejuni serotype O:23/36 (strain 81-176), this protein is Tetraacyldisaccharide 4'-kinase.